Here is a 931-residue protein sequence, read N- to C-terminus: NEDD4-binding protein 1 (931 aa).

The 85-residue stretch at Gly-75–Asn-159 folds into the KH-like domain. Disordered stretches follow at residues Met-289–Ser-329, Gln-413–Asp-474, and Cys-547–Ser-571. Basic and acidic residues-rich tracts occupy residues Thr-290–Pro-309 and Gln-319–Ser-329. Residues Ser-416–Ser-434 are compositionally biased toward polar residues. Basic and acidic residues-rich tracts occupy residues His-435–Cys-444 and Asn-456–Asp-467. A compositionally biased stretch (polar residues) spans Cys-547–His-557. An RNase NYN domain is found at Leu-659–Asp-811. Residues Leu-841–His-863 are disordered. The tract at residues Arg-884 to Asp-931 is coCUN.

This sequence belongs to the N4BP1 family.

It is found in the cytoplasm. It localises to the cytosol. Its subcellular location is the nucleus. The protein localises to the nucleolus. The protein resides in the PML body. In terms of biological role, potent suppressor of cytokine production that acts as a regulator of innate immune signaling and inflammation. Acts as a key negative regulator of select cytokine and chemokine responses elicited by TRIF-independent Toll-like receptors (TLRs), thereby limiting inflammatory cytokine responses to minor insults. Has ribonuclease activity. The polypeptide is NEDD4-binding protein 1 (Gallus gallus (Chicken)).